The chain runs to 222 residues: Cytidylate kinase (222 aa).

10 to 18 (GPAGAGKST) contacts ATP.

The protein belongs to the cytidylate kinase family. Type 1 subfamily.

It localises to the cytoplasm. It catalyses the reaction CMP + ATP = CDP + ADP. It carries out the reaction dCMP + ATP = dCDP + ADP. This is Cytidylate kinase from Halalkalibacterium halodurans (strain ATCC BAA-125 / DSM 18197 / FERM 7344 / JCM 9153 / C-125) (Bacillus halodurans).